Here is a 240-residue protein sequence, read N- to C-terminus: UDP-2,3-diacylglucosamine hydrolase (240 aa).

The Mn(2+) site is built by D8, H10, D41, N79, and H114. Position 79–80 (79–80 (NR)) interacts with substrate. D122, S160, T164, K167, and H195 together coordinate substrate. Mn(2+)-binding residues include H195 and H197.

This sequence belongs to the LpxH family. It depends on Mn(2+) as a cofactor.

It localises to the cell inner membrane. It carries out the reaction UDP-2-N,3-O-bis[(3R)-3-hydroxytetradecanoyl]-alpha-D-glucosamine + H2O = 2-N,3-O-bis[(3R)-3-hydroxytetradecanoyl]-alpha-D-glucosaminyl 1-phosphate + UMP + 2 H(+). Its pathway is glycolipid biosynthesis; lipid IV(A) biosynthesis; lipid IV(A) from (3R)-3-hydroxytetradecanoyl-[acyl-carrier-protein] and UDP-N-acetyl-alpha-D-glucosamine: step 4/6. Functionally, hydrolyzes the pyrophosphate bond of UDP-2,3-diacylglucosamine to yield 2,3-diacylglucosamine 1-phosphate (lipid X) and UMP by catalyzing the attack of water at the alpha-P atom. Involved in the biosynthesis of lipid A, a phosphorylated glycolipid that anchors the lipopolysaccharide to the outer membrane of the cell. The polypeptide is UDP-2,3-diacylglucosamine hydrolase (Pseudomonas aeruginosa (strain UCBPP-PA14)).